We begin with the raw amino-acid sequence, 417 residues long: MFSRDLTLARYDAELFAAMEQEAQRQEEHIELIASENYTSPAVMEAQGSVLTNKYAEGYPHKRYYGGCEYVDIVEQLAIDRAKQLFGADYANVQPHAGSQANAAVYLALLSAGDTILGMSLAHGGHLTHGASVSSSGKLYNAVQYGIDANGLIDYDEVERLAVEHKPKMIVAGFSAYSQVLDFARFRAIADKVGAYLFVDMAHVAGLVAAGVYPNPVPFADVVTTTTHKTLRGPRGGLILARANEEIEKKLNSAVFPSAQGGPLEHVIAAKAVCFKEALQPEFKTYQQQVLKNAQSMAQVFLDRGFDVVSGGTQNHLFLLSLIKQDITGKDADAALGRAFITVNKNSVPNDPRSPFVTSGLRIGTPAVTTRGFKEAECRELAGWICDILENMGDESVVDGVREKVKAICAKFPVYGN.

Residues Leu121 and 125 to 127 contribute to the (6S)-5,6,7,8-tetrahydrofolate site; that span reads GHL. Lys229 is modified (N6-(pyridoxal phosphate)lysine). Residue 354–356 coordinates (6S)-5,6,7,8-tetrahydrofolate; it reads SPF.

It belongs to the SHMT family. In terms of assembly, homodimer. It depends on pyridoxal 5'-phosphate as a cofactor.

Its subcellular location is the cytoplasm. The enzyme catalyses (6R)-5,10-methylene-5,6,7,8-tetrahydrofolate + glycine + H2O = (6S)-5,6,7,8-tetrahydrofolate + L-serine. The protein operates within one-carbon metabolism; tetrahydrofolate interconversion. Its pathway is amino-acid biosynthesis; glycine biosynthesis; glycine from L-serine: step 1/1. Its function is as follows. Catalyzes the reversible interconversion of serine and glycine with tetrahydrofolate (THF) serving as the one-carbon carrier. This reaction serves as the major source of one-carbon groups required for the biosynthesis of purines, thymidylate, methionine, and other important biomolecules. Also exhibits THF-independent aldolase activity toward beta-hydroxyamino acids, producing glycine and aldehydes, via a retro-aldol mechanism. The protein is Serine hydroxymethyltransferase 3 of Pseudomonas aeruginosa (strain ATCC 15692 / DSM 22644 / CIP 104116 / JCM 14847 / LMG 12228 / 1C / PRS 101 / PAO1).